Here is a 309-residue protein sequence, read N- to C-terminus: Elongation factor Ts (309 aa).

Positions 82–85 are involved in Mg(2+) ion dislocation from EF-Tu; that stretch reads TDFV.

Belongs to the EF-Ts family.

The protein resides in the cytoplasm. Associates with the EF-Tu.GDP complex and induces the exchange of GDP to GTP. It remains bound to the aminoacyl-tRNA.EF-Tu.GTP complex up to the GTP hydrolysis stage on the ribosome. The chain is Elongation factor Ts from Rickettsia peacockii (strain Rustic).